The sequence spans 512 residues: MTQTIQTQTGKNSGAGRTYEVRTFGCQMNVHDSERLSGLLEDSGYVPASEGVTPDVVVFNTCAVRENADKRLYGTLGQMKAIKDEHPGMQIAVGGCMAQKDKQTVVDKAPWVDVVFGTHNLGSLPTLLERSAHNHKAEVEIFDALEEFPSVLPAKRESAYAGWVSVSVGCNNTCTFCIVPSLRGKEQDRRPGEILAEVKALVEQGVSEVTLLGQNVNAYGVNFADETLERDRTAFSKLLRACGEIEGLERLRFTSPHPAEFTDDVIDAMAETPAVCPQLHMPLQSGSDKVLKDMKRSYRSKKFLAILDKVRERIPHAAITTDIIVGFPGETEEDFQATLDVVEKARFSSAFTFQYSPRPGTPAAEMENQVPKAVVQDRYERLLALQERISEEENRKLIGTTQELLVQADGRKNDRTQRRSGRSRDGRLVHFTPEGDVRAGDVVEVVITDAAPHFLIADGGVASHRRTRAGDMTELGETPTTAPVGVGLGMPSIKKPEPTTAGGCSTGGCGCE.

The region spanning 17–133 (RTYEVRTFGC…LPTLLERSAH (117 aa)) is the MTTase N-terminal domain. Residues cysteine 26, cysteine 62, cysteine 96, cysteine 170, cysteine 174, and cysteine 177 each contribute to the [4Fe-4S] cluster site. The Radical SAM core domain maps to 156–392 (RESAYAGWVS…LALQERISEE (237 aa)). In terms of domain architecture, TRAM spans 395–461 (RKLIGTTQEL…PHFLIADGGV (67 aa)). Residues 473-512 (TELGETPTTAPVGVGLGMPSIKKPEPTTAGGCSTGGCGCE) form a disordered region.

This sequence belongs to the methylthiotransferase family. MiaB subfamily. Monomer. Requires [4Fe-4S] cluster as cofactor.

It localises to the cytoplasm. It catalyses the reaction N(6)-dimethylallyladenosine(37) in tRNA + (sulfur carrier)-SH + AH2 + 2 S-adenosyl-L-methionine = 2-methylsulfanyl-N(6)-dimethylallyladenosine(37) in tRNA + (sulfur carrier)-H + 5'-deoxyadenosine + L-methionine + A + S-adenosyl-L-homocysteine + 2 H(+). Catalyzes the methylthiolation of N6-(dimethylallyl)adenosine (i(6)A), leading to the formation of 2-methylthio-N6-(dimethylallyl)adenosine (ms(2)i(6)A) at position 37 in tRNAs that read codons beginning with uridine. The chain is tRNA-2-methylthio-N(6)-dimethylallyladenosine synthase from Corynebacterium jeikeium (strain K411).